The chain runs to 972 residues: Hyaluronan synthase (972 aa).

The A1 stretch occupies residues 152 to 325; the sequence is KPEHQHVGLS…VSLDWRLEQF (174 aa). The tract at residues 432-604 is A2; sequence EDSHINRVPL…IRAWHLTDGF (173 aa).

Belongs to the glycosyltransferase 2 family. CS/HAS subfamily. The cofactor is Mg(2+). Co(2+) is required as a cofactor.

Its subcellular location is the cell membrane. The catalysed reaction is [hyaluronan](n) + UDP-N-acetyl-alpha-D-glucosamine = N-acetyl-beta-D-glucosaminyl-(1-&gt;4)-[hyaluronan](n) + UDP + H(+). It catalyses the reaction N-acetyl-beta-D-glucosaminyl-(1-&gt;4)-[hyaluronan](n) + UDP-alpha-D-glucuronate = [hyaluronan](n+1) + UDP + H(+). It carries out the reaction 3-O-(beta-D-GalNAc-(1-&gt;4)-beta-D-GlcA-(1-&gt;3)-beta-D-Gal-(1-&gt;3)-beta-D-Gal-(1-&gt;4)-beta-D-Xyl)-L-seryl-[protein] + UDP-alpha-D-glucuronate = 3-O-(beta-D-GlcA-(1-&gt;3)-beta-D-GalNAc-(1-&gt;4)-beta-D-GlcA-(1-&gt;3)-beta-D-Gal-(1-&gt;3)-beta-D-Gal-(1-&gt;4)-beta-D-Xyl)-L-seryl-[protein] + UDP + H(+). The enzyme catalyses 3-O-{[beta-D-GalNAc-(1-&gt;4)-beta-D-GlcA-(1-&gt;3)](n)-beta-D-GalNAc-(1-&gt;4)-beta-D-GlcA-(1-&gt;3)-beta-D-Gal-(1-&gt;3)-beta-D-Gal-(1-&gt;4)-beta-D-Xyl}-L-seryl-[protein] + UDP-alpha-D-glucuronate = 3-O-{beta-D-GlcA-(1-&gt;3)-[beta-D-GalNAc-(1-&gt;4)-beta-D-GlcA-(1-&gt;3)](n)-beta-D-GalNAc-(1-&gt;4)-beta-D-GlcA-(1-&gt;3)-beta-D-Gal-(1-&gt;3)-beta-D-Gal-(1-&gt;4)-beta-D-Xyl}-L-seryl-[protein] + UDP + H(+). Its function is as follows. Catalyzes the polymerization of hyaluronan, a polysaccharide composed of a repeating disaccharide of N-acetylglucosamine (GlcNAc) and glucuronic acid (GlcUA) units. Each unit has the composition in beta-(1-&gt;4)-GlcUA-beta-(1-&gt;3)-GlcNAc. In Pasteurella multocida, this protein is Hyaluronan synthase (hyaD).